Consider the following 396-residue polypeptide: Elongation factor Tu (396 aa).

The tr-type G domain maps to 10–206 (KPHVNVGTIG…ALDTYIPEPE (197 aa)). Positions 19–26 (GHVDHGKT) are G1. Position 19 to 26 (19 to 26 (GHVDHGKT)) interacts with GTP. Mg(2+) is bound at residue T26. The tract at residues 60–64 (GITIN) is G2. The tract at residues 81–84 (DCPG) is G3. GTP contacts are provided by residues 81–85 (DCPGH) and 136–139 (NKAD). A G4 region spans residues 136–139 (NKAD). The segment at 174 to 176 (SAL) is G5.

The protein belongs to the TRAFAC class translation factor GTPase superfamily. Classic translation factor GTPase family. EF-Tu/EF-1A subfamily. As to quaternary structure, monomer.

Its subcellular location is the cytoplasm. It carries out the reaction GTP + H2O = GDP + phosphate + H(+). Its function is as follows. GTP hydrolase that promotes the GTP-dependent binding of aminoacyl-tRNA to the A-site of ribosomes during protein biosynthesis. The protein is Elongation factor Tu of Thiobacillus denitrificans (strain ATCC 25259 / T1).